The following is a 247-amino-acid chain: Caffeoyl-CoA O-methyltransferase 2 (247 aa).

Lys-21 lines the substrate pocket. S-adenosyl-L-methionine contacts are provided by residues Thr-63, Glu-85, 87–88, Ser-93, Asp-111, and Ala-140; that span reads GV. Asp-163 contributes to the substrate binding site. A divalent metal cation is bound at residue Asp-163. Asp-165 lines the S-adenosyl-L-methionine pocket. A divalent metal cation contacts are provided by Asp-189 and Asn-190. Position 194 (Asn-194) interacts with substrate.

It belongs to the class I-like SAM-binding methyltransferase superfamily. Cation-dependent O-methyltransferase family. CCoAMT subfamily. The cofactor is a divalent metal cation.

It carries out the reaction (E)-caffeoyl-CoA + S-adenosyl-L-methionine = (E)-feruloyl-CoA + S-adenosyl-L-homocysteine + H(+). It functions in the pathway aromatic compound metabolism; phenylpropanoid biosynthesis. In terms of biological role, methylates caffeoyl-CoA to feruloyl-CoA and 5-hydroxyferuloyl-CoA to sinapoyl-CoA. Plays a role in the synthesis of feruloylated polysaccharides. Involved in the reinforcement of the plant cell wall. Also involved in the responding to wounding or pathogen challenge by the increased formation of cell wall-bound ferulic acid polymers. The sequence is that of Caffeoyl-CoA O-methyltransferase 2 (CCOAOMT2) from Populus trichocarpa (Western balsam poplar).